We begin with the raw amino-acid sequence, 189 residues long: Glutathione-dependent formaldehyde-activating enzyme (189 aa).

One can recognise a CENP-V/GFA domain in the interval 20-167 (FAGGTLVCKC…LKELGLEPYD (148 aa)). The Zn(2+) site is built by Cys27, Cys29, Cys48, Cys50, Cys53, Cys95, and Cys98.

It belongs to the Gfa family. Requires Zn(2+) as cofactor.

The catalysed reaction is S-(hydroxymethyl)glutathione = glutathione + formaldehyde. It functions in the pathway one-carbon metabolism; formaldehyde degradation; formate from formaldehyde (glutathione route): step 1/3. Its function is as follows. Catalyzes the condensation of formaldehyde and glutathione to S-hydroxymethylglutathione. The chain is Glutathione-dependent formaldehyde-activating enzyme from Rhodopseudomonas palustris (strain BisA53).